Consider the following 84-residue polypeptide: Cell division topological specificity factor (84 aa).

It belongs to the MinE family.

Prevents the cell division inhibition by proteins MinC and MinD at internal division sites while permitting inhibition at polar sites. This ensures cell division at the proper site by restricting the formation of a division septum at the midpoint of the long axis of the cell. The polypeptide is Cell division topological specificity factor (Pseudomonas entomophila (strain L48)).